The chain runs to 242 residues: Ubiquitin-conjugating enzyme E2 6 (242 aa).

Residues 1-217 are Cytoplasmic-facing; it reads MASRQAYKRL…QPAGNGTTSN (217 aa). Residues 5–163 enclose the UBC core domain; sequence QAYKRLSKEY…FPELAEQNRR (159 aa). Residue C87 is the Glycyl thioester intermediate of the active site. A helical membrane pass occupies residues 218-240; that stretch reads SIGRSLLFVLFSLAALLVAVCYT.

It belongs to the ubiquitin-conjugating enzyme family.

The protein resides in the endoplasmic reticulum membrane. It carries out the reaction S-ubiquitinyl-[E1 ubiquitin-activating enzyme]-L-cysteine + [E2 ubiquitin-conjugating enzyme]-L-cysteine = [E1 ubiquitin-activating enzyme]-L-cysteine + S-ubiquitinyl-[E2 ubiquitin-conjugating enzyme]-L-cysteine.. It participates in protein modification; protein ubiquitination. Its function is as follows. Catalyzes the covalent attachment of ubiquitin to other proteins. Functions in degradation of misfolded or regulated proteins localized in the endoplasmic reticulum (ER) lumen or membrane via the ubiquitin-proteasome system. Cognate E2 conjugating enzyme for the DOA10 ubiquitin ligase complex, which is part of the ERAD-C pathway responsible for the rapid degradation of membrane proteins with misfolded cytoplasmic domains. In Eremothecium gossypii (strain ATCC 10895 / CBS 109.51 / FGSC 9923 / NRRL Y-1056) (Yeast), this protein is Ubiquitin-conjugating enzyme E2 6 (UBC6).